Consider the following 494-residue polypeptide: MTVRTRVAPSPTGDPHVGTAYIALFNRCFAQQHGGQFILRIEDTDQTRSTDQSEQMILDSLKWLGLTWDEGPDVGGPHGPYRQSERKGIYRQYAEQLIEKGHAFKCYRTSEELDALRAGLKESGENRALKPSDLELPADEQAKREADGAPYVIRMRVPTEGRCEIHDMLRGPVELDWALVDAQILLKSDGMPTYHLANIVDDHLMEITHVIRGEEWLNSAPKHKLLYEYFGWEMPVLCHMPLLRNPDKSKLSKRKNPTSILFYQRMGYLPEALVNYLGRMGWSMPDESEKFSLTQMQEAFDIQRVSLGGPVFDVEKLSWLNGQWLREQSDEQFLDSLLDWAFNRDYAMKIIPHLRQRVETLSEVADKAAFCFNGMPAISEASFEHKQYSADDIKVWLQYLLWTYEARNDWNREGLFADAKAIADALEVKIKDFLFPVFIAIAGTSASFSVVDSMEIIGSDISRARIRHAIEVLGGVSKKQMKKLEKAYRDLPVG.

Residues 9-19 carry the 'HIGH' region motif; it reads PSPTGDPHVGT. A 'KMSKS' region motif is present at residues 250–254; sequence KLSKR. ATP is bound at residue K253.

This sequence belongs to the class-I aminoacyl-tRNA synthetase family. Glutamate--tRNA ligase type 1 subfamily. Monomer.

The protein localises to the cytoplasm. It carries out the reaction tRNA(Glu) + L-glutamate + ATP = L-glutamyl-tRNA(Glu) + AMP + diphosphate. Catalyzes the attachment of glutamate to tRNA(Glu) in a two-step reaction: glutamate is first activated by ATP to form Glu-AMP and then transferred to the acceptor end of tRNA(Glu). This is Glutamate--tRNA ligase from Alcanivorax borkumensis (strain ATCC 700651 / DSM 11573 / NCIMB 13689 / SK2).